The chain runs to 158 residues: UPF0262 protein Rsph17025_0594 (158 aa).

Belongs to the UPF0262 family.

The protein is UPF0262 protein Rsph17025_0594 of Cereibacter sphaeroides (strain ATCC 17025 / ATH 2.4.3) (Rhodobacter sphaeroides).